The chain runs to 154 residues: Ribonuclease 8 (154 aa).

The N-terminal stretch at 1-27 (MAPARAGCCPLLLLLLGLWVAQIPVSA) is a signal peptide. H42 (proton acceptor) is an active-site residue. Intrachain disulfides connect C64–C118 and C89–C96. Substrate-binding positions include 65-69 (KDLNT) and K90. The active-site Proton donor is the H149.

Belongs to the pancreatic ribonuclease family.

The protein resides in the secreted. Functionally, has a low ribonuclease activity. This is Ribonuclease 8 (RNASE8) from Chlorocebus aethiops (Green monkey).